We begin with the raw amino-acid sequence, 426 residues long: Serine--tRNA ligase (426 aa).

L-serine is bound at residue 233 to 235 (TAE). 264–266 (RSE) provides a ligand contact to ATP. E287 lines the L-serine pocket. ATP is bound at residue 351-354 (EISS). S387 is a binding site for L-serine.

The protein belongs to the class-II aminoacyl-tRNA synthetase family. Type-1 seryl-tRNA synthetase subfamily. As to quaternary structure, homodimer. The tRNA molecule binds across the dimer.

Its subcellular location is the cytoplasm. The enzyme catalyses tRNA(Ser) + L-serine + ATP = L-seryl-tRNA(Ser) + AMP + diphosphate + H(+). It catalyses the reaction tRNA(Sec) + L-serine + ATP = L-seryl-tRNA(Sec) + AMP + diphosphate + H(+). It participates in aminoacyl-tRNA biosynthesis; selenocysteinyl-tRNA(Sec) biosynthesis; L-seryl-tRNA(Sec) from L-serine and tRNA(Sec): step 1/1. Functionally, catalyzes the attachment of serine to tRNA(Ser). Is also able to aminoacylate tRNA(Sec) with serine, to form the misacylated tRNA L-seryl-tRNA(Sec), which will be further converted into selenocysteinyl-tRNA(Sec). The protein is Serine--tRNA ligase of Pseudomonas savastanoi pv. phaseolicola (strain 1448A / Race 6) (Pseudomonas syringae pv. phaseolicola (strain 1448A / Race 6)).